The sequence spans 369 residues: Glutamate 5-kinase (369 aa).

Residue lysine 9 participates in ATP binding. Serine 49, aspartate 136, and asparagine 148 together coordinate substrate. ATP contacts are provided by residues 168–169 and 210–216; these read TD and TGGMLTK. One can recognise a PUA domain in the interval 275–355; it reads QGEIYVDQGA…KGVVIHRDDW (81 aa).

Belongs to the glutamate 5-kinase family.

It is found in the cytoplasm. It carries out the reaction L-glutamate + ATP = L-glutamyl 5-phosphate + ADP. Its pathway is amino-acid biosynthesis; L-proline biosynthesis; L-glutamate 5-semialdehyde from L-glutamate: step 1/2. Catalyzes the transfer of a phosphate group to glutamate to form L-glutamate 5-phosphate. In Streptococcus sanguinis (strain SK36), this protein is Glutamate 5-kinase.